The primary structure comprises 208 residues: Methionine-R-sulfoxide reductase B1 (208 aa).

Basic and acidic residues predominate over residues 27-36; sequence QDSDNPDKRY. A disordered region spans residues 27-48; the sequence is QDSDNPDKRYSGPAATMDNKSE. The MsrB domain occupies 54–188; it reads KEELRKRLTP…NSASIEFVNA (135 aa). The Zn(2+) site is built by C93, C96, C154, and C157. C111 and C177 are disulfide-bonded. C177 serves as the catalytic Nucleophile. A disordered region spans residues 189–208; that stretch reads DPATSSPPVATPTAAPIAQQ.

Belongs to the MsrB Met sulfoxide reductase family. It depends on Zn(2+) as a cofactor. Present in the embryonic nervous system (brain and cord) in neuronal cell bodies, along axons. Also present in embryonic muscles in motor axons. Localizes to growing bristle tips where it is distributed in small puntae. Present at and at sites of actin localization.

It is found in the cytoplasm. The protein resides in the nucleus. The protein localises to the cytoskeleton. It catalyses the reaction L-methionyl-[protein] + [thioredoxin]-disulfide + H2O = L-methionyl-(R)-S-oxide-[protein] + [thioredoxin]-dithiol. Functionally, methionine-sulfoxide reductase that specifically reduces methionine (R)-sulfoxide back to methionine. While in many cases methionine oxidation is the result of random oxidation following oxidative stress, methionine oxidation is also a post-translational modification that takes place on specific residues. Acts as a regulator of actin assembly by reducing methionine (R)-sulfoxide mediated by Mical on actin thereby promoting filament repolymerization. The protein is Methionine-R-sulfoxide reductase B1 (SelR) of Drosophila melanogaster (Fruit fly).